Reading from the N-terminus, the 153-residue chain is Bacteriohemerythrin (153 aa).

Positions 21, 57, 61, 76, 80, 115, and 120 each coordinate Fe cation.

The protein belongs to the hemerythrin family. Monomer.

Functionally, oxygen-binding protein. May be involved in a storage mechanism or for delivery to oxygen-requiring enzymes. The oxygen-binding site contains two iron atoms. This Pseudomonas paraeruginosa (strain DSM 24068 / PA7) (Pseudomonas aeruginosa (strain PA7)) protein is Bacteriohemerythrin.